The sequence spans 212 residues: Glycerol-3-phosphate acyltransferase (212 aa).

The next 6 helical transmembrane spans lie at 6–26, 56–76, 92–112, 122–142, 150–170, and 171–191; these read IAVLIFTMGYLLGSVPFGLIL, LAALTLFFDIGKGALAVLLAH, LTLIAGAAAFLGHCYPVWLGF, LGVSFAAWWVAGVVFAVAWLL, SSVGGMVGAIAATISVMFMPA, and SHEIHQVYIALFSGMTILLLW.

This sequence belongs to the PlsY family. As to quaternary structure, probably interacts with PlsX.

It is found in the cell inner membrane. The catalysed reaction is an acyl phosphate + sn-glycerol 3-phosphate = a 1-acyl-sn-glycero-3-phosphate + phosphate. It participates in lipid metabolism; phospholipid metabolism. Its function is as follows. Catalyzes the transfer of an acyl group from acyl-phosphate (acyl-PO(4)) to glycerol-3-phosphate (G3P) to form lysophosphatidic acid (LPA). This enzyme utilizes acyl-phosphate as fatty acyl donor, but not acyl-CoA or acyl-ACP. This is Glycerol-3-phosphate acyltransferase from Zymomonas mobilis subsp. mobilis (strain ATCC 31821 / ZM4 / CP4).